We begin with the raw amino-acid sequence, 2197 residues long: uncharacterized protein (2197 aa).

N-acetylserine is present on S2. The HEAT repeat unit spans residues T2159–E2195.

It belongs to the HEATR1/UTP10 family.

It is found in the nucleus. Its subcellular location is the nucleolus. Involved in nucleolar processing of pre-18S ribosomal RNA. Involved in ribosome biosynthesis. This is an uncharacterized protein from Arabidopsis thaliana (Mouse-ear cress).